We begin with the raw amino-acid sequence, 215 residues long: Pyrrolidone-carboxylate peptidase (215 aa).

Residues E78, C141, and H165 contribute to the active site.

Belongs to the peptidase C15 family. As to quaternary structure, homotetramer.

It is found in the cytoplasm. The enzyme catalyses Release of an N-terminal pyroglutamyl group from a polypeptide, the second amino acid generally not being Pro.. In terms of biological role, removes 5-oxoproline from various penultimate amino acid residues except L-proline. The chain is Pyrrolidone-carboxylate peptidase (pcp) from Streptococcus pyogenes serotype M1.